The following is a 499-amino-acid chain: Probable cytosol aminopeptidase (499 aa).

Lys268 and Asp273 together coordinate Mn(2+). Lys280 is a catalytic residue. Asp291, Asp350, and Glu352 together coordinate Mn(2+). Residue Arg354 is part of the active site.

Belongs to the peptidase M17 family. The cofactor is Mn(2+).

The protein resides in the cytoplasm. It catalyses the reaction Release of an N-terminal amino acid, Xaa-|-Yaa-, in which Xaa is preferably Leu, but may be other amino acids including Pro although not Arg or Lys, and Yaa may be Pro. Amino acid amides and methyl esters are also readily hydrolyzed, but rates on arylamides are exceedingly low.. The enzyme catalyses Release of an N-terminal amino acid, preferentially leucine, but not glutamic or aspartic acids.. Functionally, presumably involved in the processing and regular turnover of intracellular proteins. Catalyzes the removal of unsubstituted N-terminal amino acids from various peptides. This Halorhodospira halophila (strain DSM 244 / SL1) (Ectothiorhodospira halophila (strain DSM 244 / SL1)) protein is Probable cytosol aminopeptidase.